The following is a 1226-amino-acid chain: Methionine synthase (1226 aa).

The 321-residue stretch at 6–326 folds into the Hcy-binding domain; that stretch reads RQQIEAQLKQ…EHIRQMAQAV (321 aa). Zn(2+)-binding residues include Cys248, Cys311, and Cys312. The 262-residue stretch at 357–618 folds into the Pterin-binding domain; the sequence is FINVGERTNV…VPEKLREAVE (262 aa). One can recognise a B12-binding N-terminal domain in the interval 651–745; it reads SALEWRTWPV…FINAEKQSGS (95 aa). Methylcob(III)alamin is bound by residues Glu695, 757–761, His760, Ser805, Thr809, and Ala861; that span reads GDVHD. The 136-residue stretch at 747 to 882 folds into the B12-binding domain; the sequence is NGKILLATVK…SDERRPAFIE (136 aa). Residues 898 to 1226 form the AdoMet activation domain; it reads KKPRTKPVTL…EKWLGPNING (329 aa). S-adenosyl-L-methionine is bound by residues Asp948, Arg1136, and 1191–1192; that span reads YF.

The protein belongs to the vitamin-B12 dependent methionine synthase family. It depends on methylcob(III)alamin as a cofactor. The cofactor is Zn(2+).

The enzyme catalyses (6S)-5-methyl-5,6,7,8-tetrahydrofolate + L-homocysteine = (6S)-5,6,7,8-tetrahydrofolate + L-methionine. Its pathway is amino-acid biosynthesis; L-methionine biosynthesis via de novo pathway; L-methionine from L-homocysteine (MetH route): step 1/1. Its function is as follows. Catalyzes the transfer of a methyl group from methyl-cobalamin to homocysteine, yielding enzyme-bound cob(I)alamin and methionine. Subsequently, remethylates the cofactor using methyltetrahydrofolate. The protein is Methionine synthase (metH) of Vibrio parahaemolyticus serotype O3:K6 (strain RIMD 2210633).